The chain runs to 480 residues: RNA-binding protein 42 (480 aa).

The segment at 1 to 30 (MAGAGPAPGLPGAGGPVVPGPGAGIPGKSG) is disordered. A2 carries the post-translational modification N-acetylalanine. Gly residues predominate over residues 11-27 (PGAGGPVVPGPGAGIPG). At S135 the chain carries Phosphoserine. Asymmetric dimethylarginine is present on residues R153, R158, R168, and R181. The necessary for interaction with HNRNPK stretch occupies residues 236–480 (ELGLGLGLGL…QKEKKKLGLR (245 aa)). Residues 319–356 (SLRPRPRPPRPEPPPGLMALEVPEPLGEDKKKGKPEKL) form a disordered region. Residues 345 to 356 (GEDKKKGKPEKL) show a composition bias toward basic and acidic residues. An RRM domain is found at 381 to 459 (FRIFCGDLGN…RPIKLRKSMW (79 aa)).

This sequence belongs to the RRM RBM42 family. As to quaternary structure, interacts with HNRNPK.

It is found in the nucleus. The protein localises to the cytoplasm. In terms of biological role, binds (via the RRM domain) to the 3'-untranslated region (UTR) of CDKN1A mRNA. This is RNA-binding protein 42 (RBM42) from Homo sapiens (Human).